A 343-amino-acid polypeptide reads, in one-letter code: Cyclin-Y-like protein 1-B (343 aa).

The segment at 1–69 (MGNTVTCCVS…ECNPSDHPQA (69 aa)) is disordered. A compositionally biased stretch (basic and acidic residues) spans 17–28 (AGRDRRVAERGE). The Cyclin N-terminal domain maps to 145–267 (DIFDEKLHPL…FLELLQFNIN (123 aa)).

The protein belongs to the cyclin family. Cyclin Y subfamily.

This chain is Cyclin-Y-like protein 1-B (ccnyl1-b), found in Xenopus laevis (African clawed frog).